The following is a 200-amino-acid chain: Alpha-amylase/subtilisin inhibitor (200 aa).

Residues 1-22 (MVSLRLPLILLSLLAISFSCSA) form the signal peptide. Disulfide bonds link C63/C112 and C162/C166.

This sequence belongs to the protease inhibitor I3 (leguminous Kunitz-type inhibitor) family.

Functionally, this protein inhibits independently subtilisin and T.castaneum alpha-amylase but not barley alpha-amylase. The protein is Alpha-amylase/subtilisin inhibitor (RASI) of Oryza sativa subsp. japonica (Rice).